The sequence spans 362 residues: Ferrochelatase (362 aa).

H228 and E309 together coordinate Fe cation.

Belongs to the ferrochelatase family.

The protein localises to the cytoplasm. It carries out the reaction heme b + 2 H(+) = protoporphyrin IX + Fe(2+). It participates in porphyrin-containing compound metabolism; protoheme biosynthesis; protoheme from protoporphyrin-IX: step 1/1. Catalyzes the ferrous insertion into protoporphyrin IX. In Bordetella parapertussis (strain 12822 / ATCC BAA-587 / NCTC 13253), this protein is Ferrochelatase.